Here is a 110-residue protein sequence, read N- to C-terminus: Prothymosin alpha (110 aa).

M1 carries the N-acetylmethionine modification. The disordered stretch occupies residues 1-110 (MSDAAVDTSS…TKKQKTDEDD (110 aa)). Residue S2 is modified to N-acetylserine; in Prothymosin alpha, N-terminally processed. S2 carries the post-translational modification Phosphoserine. A Phosphothreonine modification is found at T8. A phosphoserine mark is found at S9 and S10. Phosphothreonine occurs at positions 13 and 14. A compositionally biased stretch (basic and acidic residues) spans 13 to 31 (TTKDLKEKKEVVEEAENGR). The residue at position 15 (K15) is an N6-acetyllysine; alternate. An N6-succinyllysine; alternate modification is found at K15. Residues 42 to 83 (ENGEQEADNEVDEEEEEGGEEEEEEEEGDGEEEDGDEDEEAE) show a composition bias toward acidic residues. Positions 100-110 (DTKKQKTDEDD) are enriched in basic and acidic residues. A Phosphothreonine modification is found at T101. K102 is subject to N6-acetyllysine; alternate. K102 is covalently cross-linked (Glycyl lysine isopeptide (Lys-Gly) (interchain with G-Cter in SUMO2); alternate). Position 106 is a phosphothreonine (T106).

This sequence belongs to the pro/parathymosin family. As to quaternary structure, interacts with NUPR1; regulates apoptotic process. Post-translationally, covalently linked to a small RNA of about 20 nucleotides.

Its subcellular location is the nucleus. Its function is as follows. Prothymosin alpha may mediate immune function by conferring resistance to certain opportunistic infections. This is Prothymosin alpha (PTMA) from Pongo abelii (Sumatran orangutan).